The following is a 551-amino-acid chain: Methionine--tRNA ligase (551 aa).

Residues 12 to 22 (PYANGPLHFGH) carry the 'HIGH' region motif. Zn(2+)-binding residues include Cys144, Cys147, Cys157, and Cys160. The short motif at 330 to 334 (QFSKS) is the 'KMSKS' region element. ATP is bound at residue Lys333.

Belongs to the class-I aminoacyl-tRNA synthetase family. MetG type 1 subfamily. In terms of assembly, monomer. It depends on Zn(2+) as a cofactor.

The protein resides in the cytoplasm. It carries out the reaction tRNA(Met) + L-methionine + ATP = L-methionyl-tRNA(Met) + AMP + diphosphate. In terms of biological role, is required not only for elongation of protein synthesis but also for the initiation of all mRNA translation through initiator tRNA(fMet) aminoacylation. This Chlamydia pneumoniae (Chlamydophila pneumoniae) protein is Methionine--tRNA ligase (metG).